Here is a 530-residue protein sequence, read N- to C-terminus: Bifunctional purine biosynthesis protein PurH (530 aa).

An MGS-like domain is found at 1 to 148 (MNNARPIHRA…KNHKDVAIVV (148 aa)).

This sequence belongs to the PurH family.

It catalyses the reaction (6R)-10-formyltetrahydrofolate + 5-amino-1-(5-phospho-beta-D-ribosyl)imidazole-4-carboxamide = 5-formamido-1-(5-phospho-D-ribosyl)imidazole-4-carboxamide + (6S)-5,6,7,8-tetrahydrofolate. The catalysed reaction is IMP + H2O = 5-formamido-1-(5-phospho-D-ribosyl)imidazole-4-carboxamide. It participates in purine metabolism; IMP biosynthesis via de novo pathway; 5-formamido-1-(5-phospho-D-ribosyl)imidazole-4-carboxamide from 5-amino-1-(5-phospho-D-ribosyl)imidazole-4-carboxamide (10-formyl THF route): step 1/1. The protein operates within purine metabolism; IMP biosynthesis via de novo pathway; IMP from 5-formamido-1-(5-phospho-D-ribosyl)imidazole-4-carboxamide: step 1/1. In Vibrio cholerae serotype O1 (strain M66-2), this protein is Bifunctional purine biosynthesis protein PurH.